We begin with the raw amino-acid sequence, 115 residues long: ER exit protein (115 aa).

It belongs to the STEEP1 family.

Functionally, may stimulate membrane curvature formation and subsequent endoplasmic reticulum exit site (ERES) establishment. This chain is ER exit protein, found in Schizosaccharomyces pombe (strain 972 / ATCC 24843) (Fission yeast).